A 457-amino-acid chain; its full sequence is Cell division cycle 20.1, cofactor of APC complex (457 aa).

WD repeat units lie at residues 138–175 (VDDFYLNLLDWGSANVLAIALDHTVYLWDASTGSTSEL), 180–219 (EEKGPVTSINWAPDGRHVAVGLNNSEVQLWDSASNRQLRT), 223–260 (GHQSRVGSLAWNNHILTTGGMDGLIINNDVRIRSPIVE), 264–303 (GHTQEVCGLKWSGSGQQLASGGNDNVVHIWDRSVASSNST), 312–354 (EHTS…CLNS), 356–397 (DTGS…KMAE), and 400–439 (GHTSRVLYMAQSPDGCTVASAAGDETLRFWNVFGVPETAK).

This sequence belongs to the WD repeat CDC20/Fizzy family. The APC/C is composed of at least 11 subunits that stay tightly associated throughout the cell cycle. Interacts with APC10, FZR1, FZR2, FZR3. Binds to GIG1 and PYM. Part of the mitotic checkpoint complex (MCC); interacts with MAD2, BUB3.1, BUBR1 and BUB1. Binds to cyclins CYCA1-2, CYCB2-1 and CYCB2-2. Interacts with PANS1. Expressed in meristems and organ primordia. Present in flowers, leaves, stems, roots, pollen grains and developing seeds.

The protein localises to the nucleus. The protein operates within protein modification; protein ubiquitination. In terms of biological role, component of the anaphase promoting complex/cyclosome (APC/C), a cell cycle-regulated E3 ubiquitin-protein ligase complex that controls progression through mitosis and the G1 phase of the cell cycle. This Arabidopsis thaliana (Mouse-ear cress) protein is Cell division cycle 20.1, cofactor of APC complex (CDC20-1).